The following is a 371-amino-acid chain: Putative ribonuclease 3 (371 aa).

Residues 10–136 form the RNase III domain; sequence AKSVKDKYIP…FLGAVCMAVD (127 aa).

It belongs to the IIV-6 142R family.

It catalyses the reaction Endonucleolytic cleavage to 5'-phosphomonoester.. Its function is as follows. Digests double-stranded RNA. The chain is Putative ribonuclease 3 from Frog virus 3 (isolate Goorha) (FV-3).